Reading from the N-terminus, the 168-residue chain is uncharacterized protein (168 aa).

The or 19 signal peptide spans 1 to 21 (MKLLKALAVLSLATISSHSFA).

This is an uncharacterized protein from Haemophilus influenzae (strain ATCC 51907 / DSM 11121 / KW20 / Rd).